The following is a 230-amino-acid chain: Cytochrome c oxidase subunit 2 (230 aa).

Over 1–14 the chain is Mitochondrial intermembrane; the sequence is MAHPSQLGFQDAAS. The helical transmembrane segment at 15–45 threads the bilayer; it reads PVMEELLHFHDHALMIVFLISTLVLYIIVAM. At 46–59 the chain is on the mitochondrial matrix side; sequence VSTKLTNKYILDSQ. The helical transmembrane segment at 60–87 threads the bilayer; the sequence is EIEIIWTVLPAVILILIALPSLRILYLM. Over 88–230 the chain is Mitochondrial intermembrane; the sequence is DEINDPHLTI…SWSSLMLEDA (143 aa). Residues His161, Cys196, Glu198, Cys200, His204, and Met207 each contribute to the Cu cation site. Mg(2+) is bound at residue Glu198.

It belongs to the cytochrome c oxidase subunit 2 family. Component of the cytochrome c oxidase (complex IV, CIV), a multisubunit enzyme composed of 14 subunits. The complex is composed of a catalytic core of 3 subunits MT-CO1, MT-CO2 and MT-CO3, encoded in the mitochondrial DNA, and 11 supernumerary subunits COX4I, COX5A, COX5B, COX6A, COX6B, COX6C, COX7A, COX7B, COX7C, COX8 and NDUFA4, which are encoded in the nuclear genome. The complex exists as a monomer or a dimer and forms supercomplexes (SCs) in the inner mitochondrial membrane with NADH-ubiquinone oxidoreductase (complex I, CI) and ubiquinol-cytochrome c oxidoreductase (cytochrome b-c1 complex, complex III, CIII), resulting in different assemblies (supercomplex SCI(1)III(2)IV(1) and megacomplex MCI(2)III(2)IV(2)). Found in a complex with TMEM177, COA6, COX18, COX20, SCO1 and SCO2. Interacts with TMEM177 in a COX20-dependent manner. Interacts with COX20. Interacts with COX16. Cu cation is required as a cofactor.

It is found in the mitochondrion inner membrane. It catalyses the reaction 4 Fe(II)-[cytochrome c] + O2 + 8 H(+)(in) = 4 Fe(III)-[cytochrome c] + 2 H2O + 4 H(+)(out). Component of the cytochrome c oxidase, the last enzyme in the mitochondrial electron transport chain which drives oxidative phosphorylation. The respiratory chain contains 3 multisubunit complexes succinate dehydrogenase (complex II, CII), ubiquinol-cytochrome c oxidoreductase (cytochrome b-c1 complex, complex III, CIII) and cytochrome c oxidase (complex IV, CIV), that cooperate to transfer electrons derived from NADH and succinate to molecular oxygen, creating an electrochemical gradient over the inner membrane that drives transmembrane transport and the ATP synthase. Cytochrome c oxidase is the component of the respiratory chain that catalyzes the reduction of oxygen to water. Electrons originating from reduced cytochrome c in the intermembrane space (IMS) are transferred via the dinuclear copper A center (CU(A)) of subunit 2 and heme A of subunit 1 to the active site in subunit 1, a binuclear center (BNC) formed by heme A3 and copper B (CU(B)). The BNC reduces molecular oxygen to 2 water molecules using 4 electrons from cytochrome c in the IMS and 4 protons from the mitochondrial matrix. In Gadus morhua (Atlantic cod), this protein is Cytochrome c oxidase subunit 2 (mt-co2).